We begin with the raw amino-acid sequence, 137 residues long: Phosphomevalonate dehydratase small subunit (137 aa).

The active-site Proton acceptor is Ser62.

The protein belongs to the AcnX type II small subunit family. As to quaternary structure, heterodimer composed of a large subunit (PMDh-L) and a small subunit (PMDh-S).

It catalyses the reaction (R)-5-phosphomevalonate = (2E)-3-methyl-5-phosphooxypent-2-enoate + H2O. Its pathway is isoprenoid biosynthesis; isopentenyl diphosphate biosynthesis via mevalonate pathway. Its function is as follows. Component of a hydro-lyase that catalyzes the dehydration of mevalonate 5-phosphate (MVA5P) to form trans-anhydromevalonate 5-phosphate (tAHMP). Involved in the archaeal mevalonate (MVA) pathway, which provides fundamental precursors for isoprenoid biosynthesis, such as isopentenyl diphosphate (IPP) and dimethylallyl diphosphate (DMAPP). This is Phosphomevalonate dehydratase small subunit from Methanothrix thermoacetophila (strain DSM 6194 / JCM 14653 / NBRC 101360 / PT) (Methanosaeta thermophila).